Reading from the N-terminus, the 171-residue chain is Large ribosomal subunit protein bL17 (171 aa).

Residues 130–171 (PGYKKSKGKKATKAKGKKAKATPAAEAAAAATTEAAPAEEKK) form a disordered region. Positions 133–149 (KKSKGKKATKAKGKKAK) are enriched in basic residues. A compositionally biased stretch (low complexity) spans 150-165 (ATPAAEAAAAATTEAA).

This sequence belongs to the bacterial ribosomal protein bL17 family. Part of the 50S ribosomal subunit. Contacts protein L32.

The protein is Large ribosomal subunit protein bL17 of Opitutus terrae (strain DSM 11246 / JCM 15787 / PB90-1).